Here is a 736-residue protein sequence, read N- to C-terminus: 1,4-alpha-glucan branching enzyme GlgB (736 aa).

Catalysis depends on D417, which acts as the Nucleophile. The active-site Proton donor is E470.

The protein belongs to the glycosyl hydrolase 13 family. GlgB subfamily. Monomer.

It catalyses the reaction Transfers a segment of a (1-&gt;4)-alpha-D-glucan chain to a primary hydroxy group in a similar glucan chain.. It participates in glycan biosynthesis; glycogen biosynthesis. In terms of biological role, catalyzes the formation of the alpha-1,6-glucosidic linkages in glycogen by scission of a 1,4-alpha-linked oligosaccharide from growing alpha-1,4-glucan chains and the subsequent attachment of the oligosaccharide to the alpha-1,6 position. This is 1,4-alpha-glucan branching enzyme GlgB from Pseudomonas putida (strain ATCC 47054 / DSM 6125 / CFBP 8728 / NCIMB 11950 / KT2440).